We begin with the raw amino-acid sequence, 260 residues long: MGYIKRIGLYISIFILIVMVAGCGKDNEIKEYSKETQIKNSFAKTLDMYPIKNLEDLYDKEGYRDGEFKKGDKGTWTLLTSFSKSNKPGVIDDEGMVLYLNRNTKKATGYYFVNKIYDDISKNQNEKKYRVELKNNKIVLLDNVEDEKLKQKIENFKFFSQYADFKDLKNYQDGSITTNENVPSYEAEYKLNNSDTNVKKLRDIYPITTKKAAILKLHIDGDIKGSSVGYKKIEYKFSKVKDQETTLRDYLNFGPSDEDS.

The signal sequence occupies residues 1 to 22 (MGYIKRIGLYISIFILIVMVAG). Cys23 is lipidated: N-palmitoyl cysteine. Cys23 is lipidated: S-diacylglycerol cysteine.

This sequence belongs to the staphylococcal tandem lipoprotein family.

Its subcellular location is the cell membrane. This is an uncharacterized protein from Staphylococcus aureus (strain bovine RF122 / ET3-1).